The chain runs to 678 residues: Exoribonuclease 2 (678 aa).

Residues 193 to 521 (REDLTALPFV…INHRLLKAHI (329 aa)) form the RNB domain. One can recognise an S1 motif domain in the interval 568–650 (ETRFQAEIFD…ENRSLVGKPT (83 aa)). A disordered region spans residues 659 to 678 (ETQTSAEQPAEGAENNEPQV).

This sequence belongs to the RNR ribonuclease family. RNase II subfamily.

Its subcellular location is the cytoplasm. It catalyses the reaction Exonucleolytic cleavage in the 3'- to 5'-direction to yield nucleoside 5'-phosphates.. In terms of biological role, involved in mRNA degradation. Hydrolyzes single-stranded polyribonucleotides processively in the 3' to 5' direction. This is Exoribonuclease 2 from Vibrio cholerae serotype O1 (strain ATCC 39315 / El Tor Inaba N16961).